The chain runs to 431 residues: Adenylosuccinate synthetase (431 aa).

Residues 12-18 (GDEGKGK) and 40-42 (GHT) each bind GTP. Asp-13 acts as the Proton acceptor in catalysis. Positions 13 and 40 each coordinate Mg(2+). IMP contacts are provided by residues 13–16 (DEGK), 38–41 (NAGH), Thr-129, Arg-143, Gln-224, Thr-239, and Arg-303. The active-site Proton donor is the His-41. A substrate-binding site is contributed by 299 to 305 (TVSNRQR). Residues Arg-305, 331–333 (KLD), and 413–415 (STG) contribute to the GTP site.

This sequence belongs to the adenylosuccinate synthetase family. In terms of assembly, homodimer. Mg(2+) serves as cofactor.

Its subcellular location is the cytoplasm. It catalyses the reaction IMP + L-aspartate + GTP = N(6)-(1,2-dicarboxyethyl)-AMP + GDP + phosphate + 2 H(+). It functions in the pathway purine metabolism; AMP biosynthesis via de novo pathway; AMP from IMP: step 1/2. Its function is as follows. Plays an important role in the de novo pathway of purine nucleotide biosynthesis. Catalyzes the first committed step in the biosynthesis of AMP from IMP. This Ehrlichia canis (strain Jake) protein is Adenylosuccinate synthetase.